We begin with the raw amino-acid sequence, 147 residues long: Large ribosomal subunit protein bL9 (147 aa).

Belongs to the bacterial ribosomal protein bL9 family.

Functionally, binds to the 23S rRNA. This is Large ribosomal subunit protein bL9 from Cytophaga hutchinsonii (strain ATCC 33406 / DSM 1761 / CIP 103989 / NBRC 15051 / NCIMB 9469 / D465).